The following is a 44-amino-acid chain: Endochitinase 1 (44 aa).

The protein belongs to the glycosyl hydrolase 19 family. Chitinase class I subfamily.

The enzyme catalyses Random endo-hydrolysis of N-acetyl-beta-D-glucosaminide (1-&gt;4)-beta-linkages in chitin and chitodextrins.. Functionally, defense against chitin-containing fungal pathogens. This Capsicum chinense (Scotch bonnet) protein is Endochitinase 1.